The following is an 86-amino-acid chain: Neurotoxin homolog NL1 (86 aa).

An N-terminal signal peptide occupies residues 1 to 21 (MKTLLLTLVVVTMVCMDLGYT). 4 disulfide bridges follow: Cys-24-Cys-45, Cys-38-Cys-62, Cys-66-Cys-78, and Cys-79-Cys-84.

This sequence belongs to the three-finger toxin family. Short-chain subfamily. Orphan group VIII (haditoxin) sub-subfamily. Homodimer; non-covalently linked. In terms of tissue distribution, expressed by the venom gland.

Its subcellular location is the secreted. Functionally, antagonist of muscle and neuronal nicotinic acetylcholine receptors (nAChR) with highest affinity for neuronal alpha-7/CHRNA7 nAChRs. The polypeptide is Neurotoxin homolog NL1 (Naja atra (Chinese cobra)).